Reading from the N-terminus, the 446-residue chain is Nuclear distribution protein PAC1-1 (446 aa).

Positions 9–41 constitute a LisH domain; sequence QAEELHKSLIAYLSSINASQSVTTLREELQIGD. Residues 60-86 are a coiled coil; it reads ISVVRLQKRILDLESKIASLQAELDSA. WD repeat units follow at residues 112–153, 155–195, 199–239, 242–281, 284–344, 346–385, 390–430, and 432–446; these read SHRG…RTLK, HTRT…ANIR, GHDH…CVKT, TQGD…ARAS, GHEN…IKTL, GHNN…KLVK, AHEH…TGFR, and VIAT…RVFM.

This sequence belongs to the WD repeat LIS1/nudF family. In terms of assembly, self-associates. Interacts with NDL1 and dynein.

It localises to the cytoplasm. It is found in the cytoskeleton. Its subcellular location is the spindle pole. In terms of biological role, positively regulates the activity of the minus-end directed microtubule motor protein dynein. May enhance dynein-mediated microtubule sliding by targeting dynein to the microtubule plus end. Required for nuclear migration during vegetative growth as well as development. Required for retrograde early endosome (EE) transport from the hyphal tip. Required for localization of dynein to the mitotic spindle poles. Recruits additional proteins to the dynein complex at SPBs. This chain is Nuclear distribution protein PAC1-1, found in Uncinocarpus reesii (strain UAMH 1704).